The following is a 539-amino-acid chain: CTP synthase (539 aa).

The tract at residues 1–268 is amidoligase domain; sequence MSFKSIFLTG…SDFLLNKLGF (268 aa). Ser-14 contributes to the CTP binding site. Ser-14 is a binding site for UTP. An ATP-binding site is contributed by 15–20; that stretch reads SLGKGL. Tyr-55 lines the L-glutamine pocket. Asp-72 provides a ligand contact to ATP. Asp-72 and Glu-142 together coordinate Mg(2+). Residues 149-151, 188-193, and Lys-224 contribute to the CTP site; these read DIE and KTKPTQ. Residues 188–193 and Lys-224 each bind UTP; that span reads KTKPTQ. A Glutamine amidotransferase type-1 domain is found at 294-532; the sequence is RIGLVGKYLE…IRAAKAYSLE (239 aa). An L-glutamine-binding site is contributed by Gly-353. Cys-380 (nucleophile; for glutamine hydrolysis) is an active-site residue. Residues 381–384, Glu-404, and Arg-460 each bind L-glutamine; that span reads LGMQ. Catalysis depends on residues His-505 and Glu-507.

It belongs to the CTP synthase family. As to quaternary structure, homotetramer.

The enzyme catalyses UTP + L-glutamine + ATP + H2O = CTP + L-glutamate + ADP + phosphate + 2 H(+). It catalyses the reaction L-glutamine + H2O = L-glutamate + NH4(+). The catalysed reaction is UTP + NH4(+) + ATP = CTP + ADP + phosphate + 2 H(+). Its pathway is pyrimidine metabolism; CTP biosynthesis via de novo pathway; CTP from UDP: step 2/2. Its activity is regulated as follows. Allosterically activated by GTP, when glutamine is the substrate; GTP has no effect on the reaction when ammonia is the substrate. The allosteric effector GTP functions by stabilizing the protein conformation that binds the tetrahedral intermediate(s) formed during glutamine hydrolysis. Inhibited by the product CTP, via allosteric rather than competitive inhibition. In terms of biological role, catalyzes the ATP-dependent amination of UTP to CTP with either L-glutamine or ammonia as the source of nitrogen. Regulates intracellular CTP levels through interactions with the four ribonucleotide triphosphates. The sequence is that of CTP synthase from Chlamydia trachomatis serovar A (strain ATCC VR-571B / DSM 19440 / HAR-13).